The sequence spans 109 residues: Thioredoxin (109 aa).

The Thioredoxin domain maps to 2-109 (ETLLWKDARE…LVEKIKELFK (108 aa)). C27 and C30 are oxidised to a cystine.

It belongs to the thioredoxin family.

Its function is as follows. Participates in various redox reactions through the reversible oxidation of its active center dithiol to a disulfide and catalyzes dithiol-disulfide exchange reactions. In Mycoplasmopsis pulmonis (strain UAB CTIP) (Mycoplasma pulmonis), this protein is Thioredoxin (trxA).